We begin with the raw amino-acid sequence, 217 residues long: Ribonuclease HII (217 aa).

Residues Lys-17 to Arg-207 form the RNase H type-2 domain. Asp-23, Glu-24, and Asp-116 together coordinate a divalent metal cation.

Belongs to the RNase HII family. Mn(2+) serves as cofactor. It depends on Mg(2+) as a cofactor.

The protein localises to the cytoplasm. It carries out the reaction Endonucleolytic cleavage to 5'-phosphomonoester.. Functionally, endonuclease that specifically degrades the RNA of RNA-DNA hybrids. The sequence is that of Ribonuclease HII from Nitrosomonas europaea (strain ATCC 19718 / CIP 103999 / KCTC 2705 / NBRC 14298).